The chain runs to 185 residues: Pap fimbrial major pilin protein (185 aa).

A signal peptide spans 1 to 22 (MIKSVIAGAVAMAVVSFGVNNA). C44 and C83 are joined by a disulfide.

The protein belongs to the fimbrial protein family.

It is found in the secreted. The protein localises to the fimbrium. Functionally, polymerizes to form the thick (6.8 nm in diameter) rod of the pilus (also called fimbria). The rod is a right-handed helical cylinder with 3.28 PapA subunits per turn. Pili are polar filaments radiating from the surface of the bacterium to a length of 0.5-1.5 micrometers and numbering 100-300 per cell, and enable bacteria to colonize the epithelium of specific host organs. In Escherichia coli, this protein is Pap fimbrial major pilin protein (papA).